Reading from the N-terminus, the 1275-residue chain is Probable Rho-type GTPase-activating protein 2 (1275 aa).

Disordered stretches follow at residues 118–146 (KYES…SPYE), 213–238 (NTKR…LKDS), 280–306 (SSFR…KDNN), and 335–365 (SSPR…SKSG). The span at 122–143 (TDSFPSSQPSRANSPQSDSYSS) shows a compositional bias: polar residues. Composition is skewed to polar residues over residues 290 to 299 (TPFNSDSNIS) and 353 to 364 (PKHSTNNLSSKS). A Phosphoserine modification is found at Ser388. Disordered regions lie at residues 390–466 (IIEN…RSSF) and 539–561 (FSKS…SNSK). 2 stretches are compositionally biased toward polar residues: residues 450-466 (SLSL…RSSF) and 552-561 (QVEKSTSNSK). The PH domain occupies 719-836 (HAQKEGVLLK…WLRAILRQVP (118 aa)). A compositionally biased stretch (basic and acidic residues) spans 957–971 (ADTRRNQDAPEKHVP). Disordered regions lie at residues 957 to 988 (ADTR…TDQS) and 1254 to 1275 (NGAQ…NEFF). The region spanning 1065 to 1275 (LPLNEAVNIS…DDNGEDNEFF (211 aa)) is the Rho-GAP domain. The span at 1260–1275 (SDSDVSDDNGEDNEFF) shows a compositional bias: acidic residues.

It localises to the nucleus. In terms of biological role, GTPase-activating protein for Rho-type proteins. The polypeptide is Probable Rho-type GTPase-activating protein 2 (rga2) (Schizosaccharomyces pombe (strain 972 / ATCC 24843) (Fission yeast)).